A 224-amino-acid polypeptide reads, in one-letter code: Putative endoglucanase X (224 aa).

Residues 147-168 (QTQPTPSPSPTPTDSPLVKKGD) form a disordered region. One can recognise a Dockerin domain in the interval 162–224 (PLVKKGDVNL…SILKRILLRN (63 aa)).

The enzyme catalyses Endohydrolysis of (1-&gt;4)-beta-D-glucosidic linkages in cellulose, lichenin and cereal beta-D-glucans.. Its function is as follows. This enzyme catalyzes the endohydrolysis of 1,4-beta-glucosidic linkages in cellulose, lichenin and cereal beta-D-glucans. This Acetivibrio thermocellus (Hungateiclostridium thermocellum) protein is Putative endoglucanase X (celX).